A 294-amino-acid polypeptide reads, in one-letter code: tRNA dimethylallyltransferase (294 aa).

Residue 10-17 (GITASGKS) participates in ATP binding. 12–17 (TASGKS) is a binding site for substrate. Residues 36–39 (DSKQ) are interaction with substrate tRNA.

It belongs to the IPP transferase family. Monomer. The cofactor is Mg(2+).

It carries out the reaction adenosine(37) in tRNA + dimethylallyl diphosphate = N(6)-dimethylallyladenosine(37) in tRNA + diphosphate. In terms of biological role, catalyzes the transfer of a dimethylallyl group onto the adenine at position 37 in tRNAs that read codons beginning with uridine, leading to the formation of N6-(dimethylallyl)adenosine (i(6)A). This is tRNA dimethylallyltransferase from Wolbachia sp. subsp. Drosophila simulans (strain wRi).